We begin with the raw amino-acid sequence, 582 residues long: Tetratricopeptide repeat protein 24 (582 aa).

The disordered stretch occupies residues 1 to 31 (MSSPNPEDVPRRPEPEPSSSNKKKKKRKWLR). 8 TPR repeats span residues 36 to 69 (IQAL…ASKA), 79 to 112 (QACA…EKAQ), 117 to 150 (GDQC…YQPQ), 154 to 187 (GEAW…YAQE), 236 to 271 (GHLY…VPGE), 273 to 306 (ATVL…HGSV), 313 to 346 (GRSF…ARDS), and 353 to 386 (WQAC…CQKE). Disordered stretches follow at residues 418-481 (TSAP…RAGP) and 548-582 (VPNG…CTIV). A compositionally biased stretch (polar residues) spans 441–454 (GSSTAGVQHRSSSG). The span at 462–472 (EGHQKKKEERS) shows a compositional bias: basic and acidic residues.

The protein is Tetratricopeptide repeat protein 24 (TTC24) of Homo sapiens (Human).